A 66-amino-acid chain; its full sequence is Large ribosomal subunit protein uL29 (66 aa).

The protein belongs to the universal ribosomal protein uL29 family.

The protein is Large ribosomal subunit protein uL29 of Pseudothermotoga lettingae (strain ATCC BAA-301 / DSM 14385 / NBRC 107922 / TMO) (Thermotoga lettingae).